The chain runs to 187 residues: Elongation factor P (187 aa).

An N6-(3,6-diaminohexanoyl)-5-hydroxylysine modification is found at Lys-34.

This sequence belongs to the elongation factor P family. In terms of processing, may be beta-lysylated on the epsilon-amino group of Lys-34 by the combined action of EpmA and EpmB, and then hydroxylated on the C5 position of the same residue by EpmC (if this protein is present). Lysylation is critical for the stimulatory effect of EF-P on peptide-bond formation. The lysylation moiety may extend toward the peptidyltransferase center and stabilize the terminal 3-CCA end of the tRNA. Hydroxylation of the C5 position on Lys-34 may allow additional potential stabilizing hydrogen-bond interactions with the P-tRNA.

The protein resides in the cytoplasm. Its pathway is protein biosynthesis; polypeptide chain elongation. Functionally, involved in peptide bond synthesis. Alleviates ribosome stalling that occurs when 3 or more consecutive Pro residues or the sequence PPG is present in a protein, possibly by augmenting the peptidyl transferase activity of the ribosome. Modification of Lys-34 is required for alleviation. In Buchnera aphidicola subsp. Schizaphis graminum (strain Sg), this protein is Elongation factor P.